Reading from the N-terminus, the 269-residue chain is Type II iodothyronine deiodinase (269 aa).

Residues M1 to D7 lie on the Lumenal side of the membrane. A helical; Signal-anchor for type III membrane protein membrane pass occupies residues L8–Y28. Topologically, residues D29–M269 are cytoplasmic. The active site involves U128. Residues U128 and U261 are each a non-standard amino acid (selenocysteine).

It belongs to the iodothyronine deiodinase family. As to quaternary structure, predominantly monomer. Can form homodimers but homodimerization is not essential for enzyme activity.

Its subcellular location is the endoplasmic reticulum membrane. It carries out the reaction 3,3',5-triiodo-L-thyronine + iodide + A + H(+) = L-thyroxine + AH2. It catalyses the reaction 3,3'-diiodo-L-thyronine + iodide + A + H(+) = 3,3',5'-triiodo-L-thyronine + AH2. The catalysed reaction is 3'-iodo-L-thyronine + iodide + A + H(+) = 3',5'-diiodo-L-thyronine + AH2. The enzyme catalyses 3,3'-diiodothyronamine + iodide + A + H(+) = 3,3',5'-triiodothyronamine + AH2. It carries out the reaction 3'-iodothyronamine + iodide + A + H(+) = 3',5'-diiodothyronamine + AH2. In terms of biological role, plays a crucial role in the metabolism of thyroid hormones (TH) and has specific roles in TH activation and inactivation by deiodination. Catalyzes the deiodination of L-thyroxine (T4) to 3,5,3'-triiodothyronine (T3), 3,3',5'-triiodothyronine (rT3) to 3,3'-diiodothyronine (3,3'-T2) and 3',5'-diiodothyronine (3',5'-T2) to 3'-monoiodothyronine (3'-T1) via outer-ring deiodination (ORD). Catalyzes the phenolic ring deiodinations of 3,3',5'-triiodothyronamine and 3',5'- diiodothyronamine. This is Type II iodothyronine deiodinase (dio2) from Neoceratodus forsteri (Australian lungfish).